The primary structure comprises 303 residues: Pantothenate synthetase (303 aa).

30–37 (MGYLHAGH) contributes to the ATP binding site. H37 (proton donor) is an active-site residue. (R)-pantoate is bound at residue Q61. Beta-alanine is bound at residue Q61. 147-150 (GAKD) is a binding site for ATP. Q153 lines the (R)-pantoate pocket. ATP is bound by residues V176 and 184 to 187 (LSSR).

Belongs to the pantothenate synthetase family. Homodimer.

It is found in the cytoplasm. The catalysed reaction is (R)-pantoate + beta-alanine + ATP = (R)-pantothenate + AMP + diphosphate + H(+). Its pathway is cofactor biosynthesis; (R)-pantothenate biosynthesis; (R)-pantothenate from (R)-pantoate and beta-alanine: step 1/1. Catalyzes the condensation of pantoate with beta-alanine in an ATP-dependent reaction via a pantoyl-adenylate intermediate. This chain is Pantothenate synthetase, found in Rhizobium johnstonii (strain DSM 114642 / LMG 32736 / 3841) (Rhizobium leguminosarum bv. viciae).